The chain runs to 333 residues: MSNVVVCALYKFVSLPHFESLREPLLSMMEQAEIKGTLLLASEGINGTVAGNQAAIDALLIWLNQQNGLENITYKLSFDDEMPFYRTKVKLKKEIVTMGVEGIDPLKVVGTYVKPKDWNALISDPEVVLVDTRNDYEVQIGTFKNAINPVTETFREFPEYVKQNLDPAKHKKVAMFCTGGIRCEKSTAYLKEQGFEEVYHLEGGILKYLEEVNKAESLWEGECFVFDNRVAVDHDLKKGQYDQCNACRMPITEAEKLTPDYVQGVSCPHCIDKISEEQRKRFVERERQVNLAKSRNEAHIGSDVNHVIEARRQKKEALRKQSAEKNKAKQANA.

Residues 123 to 217 (SDPEVVLVDT…YLEEVNKAES (95 aa)) enclose the Rhodanese domain. The active-site Cysteine persulfide intermediate is the C177. Residues 313–327 (QKKEALRKQSAEKNK) show a composition bias toward basic and acidic residues. The tract at residues 313–333 (QKKEALRKQSAEKNKAKQANA) is disordered.

Belongs to the TrhO family.

The enzyme catalyses uridine(34) in tRNA + AH2 + O2 = 5-hydroxyuridine(34) in tRNA + A + H2O. In terms of biological role, catalyzes oxygen-dependent 5-hydroxyuridine (ho5U) modification at position 34 in tRNAs. In Shewanella oneidensis (strain ATCC 700550 / JCM 31522 / CIP 106686 / LMG 19005 / NCIMB 14063 / MR-1), this protein is tRNA uridine(34) hydroxylase.